Consider the following 367-residue polypeptide: uncharacterized protein (367 aa).

Residues 4–234 (LTFEHVKKSY…PANLFVAGFI (231 aa)) enclose the ABC transporter domain. 36–43 (GPSGCGKS) lines the ATP pocket.

It belongs to the ABC transporter superfamily.

This is an uncharacterized protein from Bacillus subtilis (strain 168).